The following is a 73-amino-acid chain: MSLELLSKLETKIQAALETIELLKMELEEEKQKASTLSEHNQQLNAQNQQLQEELTSWNEKVTGLVGLLNSEI.

A coiled-coil region spans residues 3-66 (LELLSKLETK…SWNEKVTGLV (64 aa)).

Belongs to the ZapB family. In terms of assembly, homodimer. The ends of the coiled-coil dimer bind to each other, forming polymers. Interacts with FtsZ.

It is found in the cytoplasm. In terms of biological role, non-essential, abundant cell division factor that is required for proper Z-ring formation. It is recruited early to the divisome by direct interaction with FtsZ, stimulating Z-ring assembly and thereby promoting cell division earlier in the cell cycle. Its recruitment to the Z-ring requires functional FtsA or ZipA. In Shewanella baltica (strain OS223), this protein is Cell division protein ZapB.